Reading from the N-terminus, the 602-residue chain is Adenylosuccinate synthetase (602 aa).

GTP contacts are provided by residues 74–80 (GDEGKGK) and 104–106 (GHT). The Proton acceptor role is filled by Asp-75. Mg(2+)-binding residues include Asp-75 and Gly-104. Residues 75 to 78 (DEGK), 102 to 105 (NAGH), Thr-189, Lys-203, Gln-315, Thr-331, and Lys-459 each bind IMP. His-105 functions as the Proton donor in the catalytic mechanism. 455–461 (AVTKKPR) serves as a coordination point for substrate. Residues Arg-461 and 589 to 591 (GNG) each bind GTP.

This sequence belongs to the adenylosuccinate synthetase family. Homodimer. Mg(2+) is required as a cofactor.

The protein localises to the cytoplasm. It carries out the reaction IMP + L-aspartate + GTP = N(6)-(1,2-dicarboxyethyl)-AMP + GDP + phosphate + 2 H(+). It functions in the pathway purine metabolism; AMP biosynthesis via de novo pathway; AMP from IMP: step 1/2. Functionally, plays an important role in the salvage pathway for purine nucleotide biosynthesis. Catalyzes the first committed step in the biosynthesis of AMP from IMP. The polypeptide is Adenylosuccinate synthetase (Trypanosoma brucei brucei (strain 927/4 GUTat10.1)).